Reading from the N-terminus, the 152-residue chain is SsrA-binding protein (152 aa).

This sequence belongs to the SmpB family.

The protein resides in the cytoplasm. Required for rescue of stalled ribosomes mediated by trans-translation. Binds to transfer-messenger RNA (tmRNA), required for stable association of tmRNA with ribosomes. tmRNA and SmpB together mimic tRNA shape, replacing the anticodon stem-loop with SmpB. tmRNA is encoded by the ssrA gene; the 2 termini fold to resemble tRNA(Ala) and it encodes a 'tag peptide', a short internal open reading frame. During trans-translation Ala-aminoacylated tmRNA acts like a tRNA, entering the A-site of stalled ribosomes, displacing the stalled mRNA. The ribosome then switches to translate the ORF on the tmRNA; the nascent peptide is terminated with the 'tag peptide' encoded by the tmRNA and targeted for degradation. The ribosome is freed to recommence translation, which seems to be the essential function of trans-translation. This is SsrA-binding protein from Rickettsia conorii (strain ATCC VR-613 / Malish 7).